We begin with the raw amino-acid sequence, 76 residues long: Rhesus theta defensin-1/3 subunit A (76 aa).

Positions 1–22 are cleaved as a signal peptide; the sequence is MRTFALLTAMLLLVALHAQAEA. A propeptide spanning residues 23–64 is cleaved from the precursor; it reads RQARADEAAAQQQPGTDDQGMAHSFTWPENAALPLSESAKGL. The disordered stretch occupies residues 25–45; it reads ARADEAAAQQQPGTDDQGMAH. Residue Arg65 forms a Cyclopeptide (Arg-Cys) (interchain with C-73 in subunit A); in form RTD-3 linkage. Arg65 is covalently cross-linked (Cyclopeptide (Arg-Cys) (interchain with C-73 in subunit B); in form RTD-1). Residues Cys68 and Cys73 are joined by a disulfide bond. Cys73 is covalently cross-linked (Cyclopeptide (Cys-Arg) (interchain with R-65 in subunit A); in form RTD-3). A Cyclopeptide (Cys-Arg) (interchain with R-65 in subunit B); in form RTD-1 cross-link involves residue Cys73. The propeptide occupies 74–76; that stretch reads RLL.

It belongs to the alpha-defensin family. Theta subfamily. RTD-1 is a cyclic heterodimer composed of subunits A and B; disulfide-linked. RTD-3 is a cyclic homodimer composed of two subunits A; disulfide-linked. Forms a cyclic peptide with subunit A (RTD-3) or with subunit B (RTD-1). An additional intersubunit disulfide bond is formed. In terms of tissue distribution, RTD-1 is expressed in bone marrow. Detected in promyelocytes, myelocytes and mature neutrophils and monocytes.

Its function is as follows. RTD-1 and RTD-3 have similar antimicrobial activities against the Gram-positive bacteria S.aureus 502A and L.monocytogenes, the Gram-negative bacteria S.typhimurium and E.coli ML35, and the fungi C.albicans 16820 and C.neoformans 271A. This Macaca mulatta (Rhesus macaque) protein is Rhesus theta defensin-1/3 subunit A (RTD1A).